The chain runs to 21 residues: Sarafotoxin-D (21 aa).

Intrachain disulfides connect Cys1-Cys15 and Cys3-Cys11.

This sequence belongs to the endothelin/sarafotoxin family. Expressed by the venom gland.

It is found in the secreted. In terms of biological role, vasoconstrictor activity. These toxins cause cardiac arrest probably as a result of coronary vasospasm. May act by displaying agonistic activities towards endothelin-1 and -2 receptors (EDNRA and EDNRB). This is Sarafotoxin-D from Atractaspis engaddensis (Israeli burrowing asp).